The chain runs to 380 residues: Shedu protein SduA (380 aa).

Functionally, only component of antiviral defense system Shedu. Expression of Shedu in B.subtilis (strain BEST7003) confers resistance to phages phi105, phi29, rho14 and to a lesser extent to SPP1. May be an endonuclease. This chain is Shedu protein SduA, found in Bacillus cereus (strain B4264).